The chain runs to 96 residues: MQFAKIASVLAMAAAAVAAPAPGNYEVEPRTGGSNNGNNQPACSAQSSNVCCNGLGCLVQILGAGCSTKSYCCQSDAPLAVGALVNVNALNCVQVL.

An N-terminal signal peptide occupies residues 1-18; that stretch reads MQFAKIASVLAMAAAAVA. 4 disulfide bridges follow: Cys43–Cys72, Cys51–Cys66, Cys52–Cys57, and Cys73–Cys92.

The protein belongs to the fungal hydrophobin family.

The protein localises to the secreted. It localises to the cell wall. Aerial growth, conidiation, and dispersal of filamentous fungi in the environment rely upon a capability of their secreting small amphipathic proteins called hydrophobins (HPBs) with low sequence identity. Class I can self-assemble into an outermost layer of rodlet bundles on aerial cell surfaces, conferring cellular hydrophobicity that supports fungal growth, development and dispersal; whereas Class II form highly ordered films at water-air interfaces through intermolecular interactions but contribute nothing to the rodlet structure. Does not seem to be important for the ability to cause seedling disease. The protein is Class I hydrophobin 3 of Gibberella moniliformis (Maize ear and stalk rot fungus).